Here is a 263-residue protein sequence, read N- to C-terminus: uncharacterized protein (263 aa).

13-20 (TGSTSGIG) lines the NADP(+) pocket. Residue Ser-141 coordinates substrate. Tyr-154 serves as the catalytic Proton acceptor.

It belongs to the short-chain dehydrogenases/reductases (SDR) family.

This is an uncharacterized protein from Bacillus subtilis (strain 168).